We begin with the raw amino-acid sequence, 326 residues long: Homeobox protein Hox-A1 (326 aa).

Residues 196 to 201 carry the Antp-type hexapeptide motif; sequence TFDWMK. Positions 221–280 form a DNA-binding region, homeobox; the sequence is PNTVRTNFTTKQLTELEKEFHFNKYLTRARRVEIAAALQLNETQVKIWFQNRRMKQKKRE. Residues 273-326 form a disordered region; that stretch reads RMKQKKREKEGLTSASPATPGSEANTEDTSDKCNSTSSTPSPSSSTSETINTSG. Residues 285-296 are compositionally biased toward polar residues; that stretch reads TSASPATPGSEA. The segment covering 306-326 has biased composition (low complexity); the sequence is NSTSSTPSPSSSTSETINTSG.

Belongs to the Antp homeobox family. Labial subfamily.

The protein localises to the nucleus. Sequence-specific transcription factor. Part of a developmental regulatory system that provides cells with specific positional identities on the anterior-posterior axis. Acts on the anterior body structures. Seems to act in the maintenance and/or generation of hindbrain segments. The protein is Homeobox protein Hox-A1 (HOXA1) of Heterodontus francisci (Horn shark).